The sequence spans 700 residues: Peroxisomal acyl-coenzyme A oxidase 3 (700 aa).

Position 2 is an N-acetylalanine (Ala2). Thr281 is subject to Phosphothreonine. The Microbody targeting signal motif lies at 698–700; that stretch reads SKL.

The protein belongs to the acyl-CoA oxidase family. It depends on FAD as a cofactor.

The protein resides in the peroxisome. It carries out the reaction a 2,3-saturated acyl-CoA + O2 = a (2E)-enoyl-CoA + H2O2. The enzyme catalyses (2S)-pristanoyl-CoA + O2 = (2E)-pristenoyl-CoA + H2O2. It catalyses the reaction tetracosanoyl-CoA + O2 = (2E)-tetracosenoyl-CoA + H2O2. The catalysed reaction is hexadecanoyl-CoA + O2 = (2E)-hexadecenoyl-CoA + H2O2. It carries out the reaction hexadecanedioyl-CoA + O2 = (2E)-hexadecenedioyl-CoA + H2O2. Its pathway is lipid metabolism; peroxisomal fatty acid beta-oxidation. Functionally, oxidizes the CoA-esters of 2-methyl-branched fatty acids. This chain is Peroxisomal acyl-coenzyme A oxidase 3 (ACOX3), found in Homo sapiens (Human).